The chain runs to 337 residues: MLLLALLLLLELSLAGSLGPGSSAQNLPENHIDLSGPALWTPQASHHRRRGLGKKERGPGTPGWTQDGAVVTATRQASRLPGAEGLLHGSSPAGLLQDKGLLRGLTRPYPEKETQAPGSERVKKRGREHKRRKERLRLHRGRALVRGPSSLMKKAELSEDQSPDALMEESSTSLAPTILYLTTFEAPATEESLILPVTSLWPQAHPRPDGEVMPTLDMALFDWTDYEDLKPEVWPSTRKKEKHRGKLSSDGNETSPAKGEPCDHHQDCLPGTCCDLREHLCTPHNRGLNNKCFDDCMCVEGLRCYAKFHRNRRVTRRKGRCVEPETANGDQGSFINV.

Positions 1 to 24 (MLLLALLLLLELSLAGSLGPGSSA) are cleaved as a signal peptide. Disordered stretches follow at residues 36-67 (GPALWTPQASHHRRRGLGKKERGPGTPGWTQD), 107-133 (RPYPEKETQAPGSERVKKRGREHKRRK), and 234-261 (WPSTRKKEKHRGKLSSDGNETSPAKGEP). 2 stretches are compositionally biased toward basic residues: residues 122-133 (VKKRGREHKRRK) and 237-246 (TRKKEKHRGK). Asn252 is a glycosylation site (N-linked (GlcNAc...) asparagine).

It belongs to the draxin family. As to quaternary structure, interacts with LRP6.

It is found in the secreted. Chemorepulsive axon guidance protein required for the development of spinal cord and forebrain commissures. Acts as a chemorepulsive guidance protein for commissural axons during development. Able to inhibit or repel neurite outgrowth from dorsal spinal cord. Inhibits the stabilization of cytosolic beta-catenin (CTNNB1) via its interaction with LRP6, thereby acting as an antagonist of Wnt signaling pathway. This Bos taurus (Bovine) protein is Draxin.